The primary structure comprises 237 residues: Phosphoribosylaminoimidazole-succinocarboxamide synthase (237 aa).

Belongs to the SAICAR synthetase family.

The enzyme catalyses 5-amino-1-(5-phospho-D-ribosyl)imidazole-4-carboxylate + L-aspartate + ATP = (2S)-2-[5-amino-1-(5-phospho-beta-D-ribosyl)imidazole-4-carboxamido]succinate + ADP + phosphate + 2 H(+). Its pathway is purine metabolism; IMP biosynthesis via de novo pathway; 5-amino-1-(5-phospho-D-ribosyl)imidazole-4-carboxamide from 5-amino-1-(5-phospho-D-ribosyl)imidazole-4-carboxylate: step 1/2. The sequence is that of Phosphoribosylaminoimidazole-succinocarboxamide synthase from Listeria monocytogenes serotype 4b (strain CLIP80459).